Here is a 232-residue protein sequence, read N- to C-terminus: 7-cyano-7-deazaguanine synthase (232 aa).

8–18 provides a ligand contact to ATP; sequence LSGGLDSATVL. Cys188, Cys198, Cys201, and Cys204 together coordinate Zn(2+).

This sequence belongs to the QueC family. It depends on Zn(2+) as a cofactor.

The enzyme catalyses 7-carboxy-7-deazaguanine + NH4(+) + ATP = 7-cyano-7-deazaguanine + ADP + phosphate + H2O + H(+). Its pathway is purine metabolism; 7-cyano-7-deazaguanine biosynthesis. Its function is as follows. Catalyzes the ATP-dependent conversion of 7-carboxy-7-deazaguanine (CDG) to 7-cyano-7-deazaguanine (preQ(0)). This is 7-cyano-7-deazaguanine synthase from Nitrosospira multiformis (strain ATCC 25196 / NCIMB 11849 / C 71).